Here is an 87-residue protein sequence, read N- to C-terminus: Exodeoxyribonuclease 7 small subunit (87 aa).

The protein belongs to the XseB family. As to quaternary structure, heterooligomer composed of large and small subunits.

It is found in the cytoplasm. It catalyses the reaction Exonucleolytic cleavage in either 5'- to 3'- or 3'- to 5'-direction to yield nucleoside 5'-phosphates.. Bidirectionally degrades single-stranded DNA into large acid-insoluble oligonucleotides, which are then degraded further into small acid-soluble oligonucleotides. This chain is Exodeoxyribonuclease 7 small subunit, found in Halorhodospira halophila (strain DSM 244 / SL1) (Ectothiorhodospira halophila (strain DSM 244 / SL1)).